We begin with the raw amino-acid sequence, 273 residues long: Endoplasmic reticulum resident protein 27 (273 aa).

The N-terminal stretch at 1 to 25 (MEAAPSRFMFLLFLLTCELAAEVAA) is a signal peptide. Residues 39–152 (EPTWLTDVPA…MVTEYNPVTV (114 aa)) form the Thioredoxin domain. An N-linked (GlcNAc...) asparagine glycan is attached at Asn100. Positions 230–233 (DEWD) are PDIA3-binding site. The short motif at 270-273 (KVEL) is the Prevents secretion from ER element.

It belongs to the protein disulfide isomerase family. As to quaternary structure, interacts with PDIA3.

The protein resides in the endoplasmic reticulum lumen. Its function is as follows. Specifically binds unfolded proteins and may recruit protein disulfide isomerase PDIA3 to unfolded substrates. Binds protein substrates via a hydrophobic pocket in the C-terminal domain. May play a role in the unfolded stress response. This Homo sapiens (Human) protein is Endoplasmic reticulum resident protein 27 (ERP27).